The primary structure comprises 309 residues: Succinoglycan biosynthesis protein ExoM (309 aa).

This sequence belongs to the glycosyltransferase 2 family.

The protein localises to the cell inner membrane. It functions in the pathway glycan metabolism; exopolysaccharide biosynthesis. Glycosyltransferase required for the synthesis of succinoglycan (EPS I). Needed for the addition of the fourth sugar (glucose), catalyzes the formation of a beta-1,4 linkage between the third acetylated sugar and the fourth sugar. This Rhizobium meliloti (strain 1021) (Ensifer meliloti) protein is Succinoglycan biosynthesis protein ExoM (exoM).